Consider the following 240-residue polypeptide: Molybdate/tungstate import ATP-binding protein WtpC (240 aa).

Residues 2–227 (FLKVRAEKRL…KNGEVAEFLS (226 aa)) enclose the ABC transporter domain. An ATP-binding site is contributed by 31 to 38 (GPTGAGKS).

This sequence belongs to the ABC transporter superfamily. Sulfate/tungstate importer (TC 3.A.1.6) family. In terms of assembly, the complex is composed of two ATP-binding proteins (WtpC), two transmembrane proteins (WtpB) and a solute-binding protein (WtpA).

It is found in the cell membrane. The catalysed reaction is tungstate(in) + ATP + H2O = tungstate(out) + ADP + phosphate + H(+). Its function is as follows. Part of the ABC transporter complex WtpABC involved in molybdate/tungstate import. Responsible for energy coupling to the transport system. The chain is Molybdate/tungstate import ATP-binding protein WtpC (wtpC) from Archaeoglobus fulgidus (strain ATCC 49558 / DSM 4304 / JCM 9628 / NBRC 100126 / VC-16).